Reading from the N-terminus, the 308-residue chain is Acetyl-coenzyme A carboxylase carboxyl transferase subunit beta (308 aa).

A CoA carboxyltransferase N-terminal domain is found at 25-294; that stretch reads VWTKCTSCEQ…PLVVSVNDSP (270 aa). Residues Cys-29, Cys-32, Cys-48, and Cys-51 each contribute to the Zn(2+) site. The C4-type zinc finger occupies 29–51; that stretch reads CTSCEQVLYHAELERNLEVCPKC.

It belongs to the AccD/PCCB family. In terms of assembly, acetyl-CoA carboxylase is a heterohexamer composed of biotin carboxyl carrier protein (AccB), biotin carboxylase (AccC) and two subunits each of ACCase subunit alpha (AccA) and ACCase subunit beta (AccD). Zn(2+) is required as a cofactor.

It is found in the cytoplasm. The enzyme catalyses N(6)-carboxybiotinyl-L-lysyl-[protein] + acetyl-CoA = N(6)-biotinyl-L-lysyl-[protein] + malonyl-CoA. It participates in lipid metabolism; malonyl-CoA biosynthesis; malonyl-CoA from acetyl-CoA: step 1/1. Component of the acetyl coenzyme A carboxylase (ACC) complex. Biotin carboxylase (BC) catalyzes the carboxylation of biotin on its carrier protein (BCCP) and then the CO(2) group is transferred by the transcarboxylase to acetyl-CoA to form malonyl-CoA. The chain is Acetyl-coenzyme A carboxylase carboxyl transferase subunit beta from Vibrio vulnificus (strain CMCP6).